The primary structure comprises 59 residues: Large ribosomal subunit protein bL32 (59 aa).

The protein belongs to the bacterial ribosomal protein bL32 family.

The sequence is that of Large ribosomal subunit protein bL32 from Limosilactobacillus reuteri (strain DSM 20016) (Lactobacillus reuteri).